A 227-amino-acid polypeptide reads, in one-letter code: 7-cyano-7-deazaguanine synthase (227 aa).

An ATP-binding site is contributed by 7–17 (LSGGMDSLVTT). Positions 187, 195, 198, and 201 each coordinate Zn(2+).

This sequence belongs to the QueC family. The cofactor is Zn(2+).

The enzyme catalyses 7-carboxy-7-deazaguanine + NH4(+) + ATP = 7-cyano-7-deazaguanine + ADP + phosphate + H2O + H(+). It functions in the pathway purine metabolism; 7-cyano-7-deazaguanine biosynthesis. Its function is as follows. Catalyzes the ATP-dependent conversion of 7-carboxy-7-deazaguanine (CDG) to 7-cyano-7-deazaguanine (preQ(0)). The sequence is that of 7-cyano-7-deazaguanine synthase from Chlorobium phaeovibrioides (strain DSM 265 / 1930) (Prosthecochloris vibrioformis (strain DSM 265)).